The following is a 291-amino-acid chain: Glycine--tRNA ligase alpha subunit (291 aa).

It belongs to the class-II aminoacyl-tRNA synthetase family. In terms of assembly, tetramer of two alpha and two beta subunits.

Its subcellular location is the cytoplasm. It catalyses the reaction tRNA(Gly) + glycine + ATP = glycyl-tRNA(Gly) + AMP + diphosphate. This Coprothermobacter proteolyticus (strain ATCC 35245 / DSM 5265 / OCM 4 / BT) protein is Glycine--tRNA ligase alpha subunit.